We begin with the raw amino-acid sequence, 484 residues long: Zinc metalloproteinase-disintegrin jerdonitin (484 aa).

A signal peptide spans 1–20 (MIQVLLVTICLAVFPYQGSS). The propeptide occupies 21 to 191 (IILESGNIDD…KLSQIMIPPE (171 aa)). A Pyrrolidone carboxylic acid modification is found at Gln-192. The 199-residue stretch at 194 to 392 (RYIELVIVAD…FTSRCLYNEP (199 aa)) folds into the Peptidase M12B domain. Ca(2+) is bound by residues Glu-197 and Asp-281. Intrachain disulfides connect Cys-305–Cys-387, Cys-345–Cys-369, and Cys-347–Cys-352. Residue His-330 coordinates Zn(2+). Glu-331 is a catalytic residue. Residues His-334 and His-340 each contribute to the Zn(2+) site. 7 residues coordinate Ca(2+): Cys-387, Asn-390, Val-402, Asn-405, Glu-409, Glu-412, and Asp-415. The Disintegrin domain occupies 400–484 (PSVCGNYYME…AGCPRNPFHA (85 aa)). Intrachain disulfides connect Cys-403–Cys-422, Cys-414–Cys-432, Cys-416–Cys-427, Cys-426–Cys-449, Cys-440–Cys-446, Cys-445–Cys-470, and Cys-458–Cys-477. A Cell attachment site motif is present at residues 462 to 464 (RGD).

Belongs to the venom metalloproteinase (M12B) family. P-II subfamily. P-IIb sub-subfamily. Monomer. The cofactor is Zn(2+). In terms of processing, the N-terminus is blocked. Expressed by the venom gland.

The protein localises to the secreted. Fibrinogenolytic activity is completely inhibited by EDTA, but not by PMSF. Its function is as follows. Snake venom zinc metalloproteinase that inhibits ADP-induced human platelet aggregation (IC(50)=120 nM (native) and IC(50)=248 nM (recombinant)). May act by binding to the receptor GPIIb/GPIIIa (ITGA2B/ITGB3) on the platelet surface. Degrades the alpha-chain of fibrinogen completely and the beta-chain partially, leaving the gamma chain intact. Also inhibits the growth of several cell lines, including human liver cancer cells (Bel7402), human leukemia cells (K562) and human gastric carcinoma cells (BGC823). The protein is Zinc metalloproteinase-disintegrin jerdonitin of Protobothrops jerdonii (Jerdon's pitviper).